Here is a 460-residue protein sequence, read N- to C-terminus: Putative movement protein (460 aa).

Disordered stretches follow at residues 267–314 (SGSK…SDFE) and 349–460 (RQNQ…PSGL). Positions 368–379 (RKSKGISGRRKQ) are enriched in basic residues.

The protein belongs to the tobamoviruses movement protein family.

In terms of biological role, suppressor of viral-induced RNA silencing. This Crataegus (hawthorn) protein is Putative movement protein.